The chain runs to 243 residues: Probable phosphatase CBO3379/CLC_3322 (243 aa).

9 residues coordinate Zn(2+): H8, H10, H16, H41, E74, H102, H132, D192, and H194.

It belongs to the PHP family. It depends on Zn(2+) as a cofactor.

This is Probable phosphatase CBO3379/CLC_3322 from Clostridium botulinum (strain Hall / ATCC 3502 / NCTC 13319 / Type A).